We begin with the raw amino-acid sequence, 416 residues long: Argininosuccinate synthase (416 aa).

ATP is bound by residues 11–19 (AYSGGLDTS) and Ala-37. Residue Tyr-88 coordinates L-citrulline. Tyr-88 and Tyr-114 each carry phosphotyrosine. An ATP-binding site is contributed by 116–124 (AHGATGKGN). Thr-120, Asn-124, and Asp-125 together coordinate L-aspartate. Asn-124 is an L-citrulline binding site. Residues Arg-128, Ser-181, Ser-190, Glu-271, and Tyr-283 each coordinate L-citrulline. Ser-181 carries the phosphoserine modification.

Belongs to the argininosuccinate synthase family. As to quaternary structure, homotetramer.

The protein localises to the cytoplasm. Its subcellular location is the cytosol. The enzyme catalyses L-citrulline + L-aspartate + ATP = 2-(N(omega)-L-arginino)succinate + AMP + diphosphate + H(+). It participates in amino-acid biosynthesis; L-arginine biosynthesis; L-arginine from L-ornithine and carbamoyl phosphate: step 2/3. It functions in the pathway nitrogen metabolism; urea cycle; (N(omega)-L-arginino)succinate from L-aspartate and L-citrulline: step 1/1. Functionally, one of the enzymes of the urea cycle, the metabolic pathway transforming neurotoxic amonia produced by protein catabolism into inocuous urea in the liver of ureotelic animals. Catalyzes the formation of arginosuccinate from aspartate, citrulline and ATP and together with ASL it is responsible for the biosynthesis of arginine in most body tissues. The polypeptide is Argininosuccinate synthase (Gallus gallus (Chicken)).